A 263-amino-acid polypeptide reads, in one-letter code: MEKNNKKRFVLVHGLCHGAWCWYKVKTHLEAVGHCVTAVDLAASGINMTRLEEIQTLKDYCKPLLELLNSLGSDDDKVILVAHSMGGIPAALASDIFPSKIATIVFLTAFMPDTRNLPAYVYQKLIRSVPQEGWLDTVFGTYGKHECPLEFALFGPKFMAKNLYQLSPVQDLELAKMLVRVNPIITNNLAGTRSFSEEGYGTVTRIYIVCGEDMAVPEDYQWWMIKNFPPKEVMEIKCADHMAMFSKPHKLCALLVEIACKYA.

Catalysis depends on serine 84, which acts as the Acyl-ester intermediate. Catalysis depends on charge relay system residues aspartate 213 and histidine 241.

Belongs to the AB hydrolase superfamily. Methylesterase family.

The enzyme catalyses methyl salicylate + H2O = salicylate + methanol + H(+). Its pathway is plant hormone biosynthesis. Esterase activity is down-regulated by salicylic acid (SA). Functionally, methylesterase shown to have carboxylesterase activity and methyl salicylate (MeSA) esterase activity in vitro. In Arabidopsis thaliana (Mouse-ear cress), this protein is Methylesterase 4.